Consider the following 347-residue polypeptide: GTPase Obg (347 aa).

Positions 1–159 (MHFIDQAEIE…VRLRLELKLI (159 aa)) constitute an Obg domain. Residues 160–328 (AEVGIVGLPN…LLQRVWQCLG (169 aa)) enclose the OBG-type G domain. GTP is bound by residues 166-173 (GLPNAGKS), 191-195 (FTTLQ), 213-216 (DIPG), 280-283 (NKID), and 309-311 (SAI). Positions 173 and 193 each coordinate Mg(2+).

It belongs to the TRAFAC class OBG-HflX-like GTPase superfamily. OBG GTPase family. As to quaternary structure, monomer. Requires Mg(2+) as cofactor.

The protein resides in the cytoplasm. An essential GTPase which binds GTP, GDP and possibly (p)ppGpp with moderate affinity, with high nucleotide exchange rates and a fairly low GTP hydrolysis rate. Plays a role in control of the cell cycle, stress response, ribosome biogenesis and in those bacteria that undergo differentiation, in morphogenesis control. This chain is GTPase Obg, found in Synechococcus sp. (strain JA-2-3B'a(2-13)) (Cyanobacteria bacterium Yellowstone B-Prime).